A 389-amino-acid polypeptide reads, in one-letter code: S-adenosylmethionine synthase (389 aa).

Position 15 (His-15) interacts with ATP. Asp-17 contributes to the Mg(2+) binding site. Glu-43 is a binding site for K(+). Residues Glu-56 and Gln-99 each coordinate L-methionine. The segment at 99–109 (QSPDIAQGVNE) is flexible loop. Residues 166-168 (DAK), 234-235 (RF), Asp-243, 249-250 (RK), Ala-266, and Lys-270 contribute to the ATP site. Asp-243 contributes to the L-methionine binding site. Residue Lys-274 coordinates L-methionine.

It belongs to the AdoMet synthase family. As to quaternary structure, homotetramer; dimer of dimers. Requires Mg(2+) as cofactor. It depends on K(+) as a cofactor.

The protein localises to the cytoplasm. It carries out the reaction L-methionine + ATP + H2O = S-adenosyl-L-methionine + phosphate + diphosphate. It functions in the pathway amino-acid biosynthesis; S-adenosyl-L-methionine biosynthesis; S-adenosyl-L-methionine from L-methionine: step 1/1. In terms of biological role, catalyzes the formation of S-adenosylmethionine (AdoMet) from methionine and ATP. The overall synthetic reaction is composed of two sequential steps, AdoMet formation and the subsequent tripolyphosphate hydrolysis which occurs prior to release of AdoMet from the enzyme. The sequence is that of S-adenosylmethionine synthase from Chromobacterium violaceum (strain ATCC 12472 / DSM 30191 / JCM 1249 / CCUG 213 / NBRC 12614 / NCIMB 9131 / NCTC 9757 / MK).